The sequence spans 299 residues: Phosphatidylserine decarboxylase proenzyme (299 aa).

Residues D90, H147, and S254 each act as charge relay system; for autoendoproteolytic cleavage activity in the active site. S254 functions as the Schiff-base intermediate with substrate; via pyruvic acid; for decarboxylase activity in the catalytic mechanism. Position 254 is a pyruvic acid (Ser); by autocatalysis (S254).

It belongs to the phosphatidylserine decarboxylase family. PSD-B subfamily. Prokaryotic type I sub-subfamily. Heterodimer of a large membrane-associated beta subunit and a small pyruvoyl-containing alpha subunit. It depends on pyruvate as a cofactor. Is synthesized initially as an inactive proenzyme. Formation of the active enzyme involves a self-maturation process in which the active site pyruvoyl group is generated from an internal serine residue via an autocatalytic post-translational modification. Two non-identical subunits are generated from the proenzyme in this reaction, and the pyruvate is formed at the N-terminus of the alpha chain, which is derived from the carboxyl end of the proenzyme. The autoendoproteolytic cleavage occurs by a canonical serine protease mechanism, in which the side chain hydroxyl group of the serine supplies its oxygen atom to form the C-terminus of the beta chain, while the remainder of the serine residue undergoes an oxidative deamination to produce ammonia and the pyruvoyl prosthetic group on the alpha chain. During this reaction, the Ser that is part of the protease active site of the proenzyme becomes the pyruvoyl prosthetic group, which constitutes an essential element of the active site of the mature decarboxylase.

The protein localises to the cell membrane. The enzyme catalyses a 1,2-diacyl-sn-glycero-3-phospho-L-serine + H(+) = a 1,2-diacyl-sn-glycero-3-phosphoethanolamine + CO2. It participates in phospholipid metabolism; phosphatidylethanolamine biosynthesis; phosphatidylethanolamine from CDP-diacylglycerol: step 2/2. Functionally, catalyzes the formation of phosphatidylethanolamine (PtdEtn) from phosphatidylserine (PtdSer). The sequence is that of Phosphatidylserine decarboxylase proenzyme from Erwinia tasmaniensis (strain DSM 17950 / CFBP 7177 / CIP 109463 / NCPPB 4357 / Et1/99).